A 498-amino-acid polypeptide reads, in one-letter code: RuvB-like helicase 2 (498 aa).

An ATP-binding site is contributed by 79 to 86 (GPPSTGKT). The interval 458-498 (VTIGQESTDGSTQPQAKQQEVAQPEATQPQSQPEDDKMETD) is disordered. The segment covering 461-489 (GQESTDGSTQPQAKQQEVAQPEATQPQSQ) has biased composition (polar residues).

This sequence belongs to the RuvB family. In terms of assembly, may form heterododecamers with RVB1. Component of the SWR1 chromatin remodeling complex, the INO80 chromatin remodeling complex, and of the R2TP complex.

The protein localises to the nucleus. The enzyme catalyses ATP + H2O = ADP + phosphate + H(+). Its function is as follows. DNA helicase which participates in several chromatin remodeling complexes, including the SWR1 and the INO80 complexes. The SWR1 complex mediates the ATP-dependent exchange of histone H2A for the H2A variant HZT1 leading to transcriptional regulation of selected genes by chromatin remodeling. The INO80 complex remodels chromatin by shifting nucleosomes and is involved in DNA repair. Also involved in pre-rRNA processing. This chain is RuvB-like helicase 2 (RVB2), found in Candida albicans (strain SC5314 / ATCC MYA-2876) (Yeast).